Here is a 397-residue protein sequence, read N- to C-terminus: Anhydro-N-acetylmuramic acid kinase (397 aa).

An ATP-binding site is contributed by 9–16; it reads GTSYDAID.

This sequence belongs to the anhydro-N-acetylmuramic acid kinase family.

The catalysed reaction is 1,6-anhydro-N-acetyl-beta-muramate + ATP + H2O = N-acetyl-D-muramate 6-phosphate + ADP + H(+). It participates in amino-sugar metabolism; 1,6-anhydro-N-acetylmuramate degradation. Its pathway is cell wall biogenesis; peptidoglycan recycling. Catalyzes the specific phosphorylation of 1,6-anhydro-N-acetylmuramic acid (anhMurNAc) with the simultaneous cleavage of the 1,6-anhydro ring, generating MurNAc-6-P. Is required for the utilization of anhMurNAc either imported from the medium or derived from its own cell wall murein, and thus plays a role in cell wall recycling. In Rhodococcus erythropolis (strain PR4 / NBRC 100887), this protein is Anhydro-N-acetylmuramic acid kinase.